Reading from the N-terminus, the 305-residue chain is Type II secretion system protein C (305 aa).

Topologically, residues 1-29 (MEFKQLPPLAAWPRLLSQNTLRWQKPISE) are cytoplasmic. A helical transmembrane segment spans residues 30 to 50 (GLTLLLLVASAWTLGKMVWVV). Over 51–305 (SAEQTPVPTW…GQQHDVYIQF (255 aa)) the chain is Periplasmic.

The protein belongs to the GSP C family.

The protein resides in the cell inner membrane. Involved in a type II secretion system (T2SS, formerly general secretion pathway, GSP) for the export of proteins. Required for secretion of cholera toxin through the outer membrane. The sequence is that of Type II secretion system protein C (epsC) from Vibrio cholerae serotype O1 (strain ATCC 39315 / El Tor Inaba N16961).